The following is a 395-amino-acid chain: Flap endonuclease 1 (395 aa).

Residues 1-104 (MGIKHLFQVI…GELAKRTARK (104 aa)) are N-domain. Aspartate 34 is a binding site for Mg(2+). Residues arginine 47 and arginine 70 each coordinate DNA. Mg(2+) is bound at residue aspartate 86. Residues 102–121 (ARKAEATEAHEEAKETGTAE) form a disordered region. Residues 122–253 (DVEKFSRRTV…NTALKLIREH (132 aa)) form an I-domain region. Mg(2+) is bound by residues glutamate 158, glutamate 160, aspartate 179, and aspartate 181. DNA is bound at residue glutamate 158. Positions 231 and 233 each coordinate DNA. Residue aspartate 233 coordinates Mg(2+). The interval 341–349 (QQSRLEGFF) is interaction with PCNA. The tract at residues 348–395 (FFKPVARTDEEKASLKRKHDEKLQEQKKRKKEEAKAKKEAKAKPRGAA) is disordered. Basic and acidic residues predominate over residues 353–389 (ARTDEEKASLKRKHDEKLQEQKKRKKEEAKAKKEAKA).

It belongs to the XPG/RAD2 endonuclease family. FEN1 subfamily. As to quaternary structure, interacts with PCNA. Three molecules of fen1 bind to one PCNA trimer with each molecule binding to one PCNA monomer. PCNA stimulates the nuclease activity without altering cleavage specificity. Mg(2+) serves as cofactor. Phosphorylated. Phosphorylation upon DNA damage induces relocalization to the nuclear plasma.

It localises to the nucleus. It is found in the nucleolus. The protein resides in the nucleoplasm. The protein localises to the mitochondrion. Its function is as follows. Structure-specific nuclease with 5'-flap endonuclease and 5'-3' exonuclease activities involved in DNA replication and repair. During DNA replication, cleaves the 5'-overhanging flap structure that is generated by displacement synthesis when DNA polymerase encounters the 5'-end of a downstream Okazaki fragment. It enters the flap from the 5'-end and then tracks to cleave the flap base, leaving a nick for ligation. Also involved in the long patch base excision repair (LP-BER) pathway, by cleaving within the apurinic/apyrimidinic (AP) site-terminated flap. Acts as a genome stabilization factor that prevents flaps from equilibrating into structures that lead to duplications and deletions. Also possesses 5'-3' exonuclease activity on nicked or gapped double-stranded DNA, and exhibits RNase H activity. Also involved in replication and repair of rDNA and in repairing mitochondrial DNA. The protein is Flap endonuclease 1 (fen1) of Aspergillus fumigatus (strain CBS 144.89 / FGSC A1163 / CEA10) (Neosartorya fumigata).